The primary structure comprises 177 residues: Large ribosomal subunit protein uL5 (177 aa).

It belongs to the universal ribosomal protein uL5 family. As to quaternary structure, part of the 50S ribosomal subunit; part of the 5S rRNA/L5/L18/L25 subcomplex. Contacts the 5S rRNA and the P site tRNA. Forms a bridge to the 30S subunit in the 70S ribosome.

This is one of the proteins that bind and probably mediate the attachment of the 5S RNA into the large ribosomal subunit, where it forms part of the central protuberance. In the 70S ribosome it contacts protein S13 of the 30S subunit (bridge B1b), connecting the 2 subunits; this bridge is implicated in subunit movement. Contacts the P site tRNA; the 5S rRNA and some of its associated proteins might help stabilize positioning of ribosome-bound tRNAs. This is Large ribosomal subunit protein uL5 from Wolbachia sp. subsp. Brugia malayi (strain TRS).